Here is a 449-residue protein sequence, read N- to C-terminus: Chlorobenzene dioxygenase subunit alpha (449 aa).

The Rieske domain maps to 54 to 163; that stretch reads WLLLGHETQI…VATYKGLIFA (110 aa). [2Fe-2S] cluster contacts are provided by cysteine 96, histidine 98, cysteine 116, and histidine 119. Fe cation contacts are provided by histidine 222, histidine 228, and aspartate 376.

Belongs to the bacterial ring-hydroxylating dioxygenase alpha subunit family. In terms of assembly, this dioxygenase system consists of four proteins: the two subunits of the oxygenase component (TecA1 and TecA2), a ferredoxin (TecA3) and a ferredoxin reductase (TecA4). [2Fe-2S] cluster serves as cofactor. The cofactor is Fe cation.

It carries out the reaction chlorobenzene + NADH + O2 + H(+) = (1R,2R)-3-chlorocyclohexa-3,5-diene-1,2-diol + NAD(+). It participates in aromatic compound metabolism. In terms of biological role, part of the oxygenase component of the chlorobenzene dioxygenase system that catalyzes the dihydroxylation of a range of aromatic compounds, including chlorinated benzenes and toluenes, and dinuclear aromatics such as biphenyl and dibenzo-p-dioxin. The alpha subunit is responsible for substrate specificity. This chain is Chlorobenzene dioxygenase subunit alpha, found in Cupriavidus sp. (strain PS12).